The following is a 512-amino-acid chain: Glutathione-binding protein GsiB (512 aa).

Positions 1–26 (MTQFITHKWLAALGLASSIAAFPALA) are cleaved as a signal peptide.

The protein belongs to the bacterial solute-binding protein 5 family. In terms of assembly, the complex is composed of two ATP-binding proteins (GsiA), two transmembrane proteins (GsiC and GsiD) and a solute-binding protein (GsiB).

Its subcellular location is the periplasm. Part of the ABC transporter complex GsiABCD involved in glutathione import. Binds glutathione. This is Glutathione-binding protein GsiB from Salmonella choleraesuis (strain SC-B67).